Consider the following 254-residue polypeptide: Chalcone isomerase cfoK (254 aa).

Active-site residues include His33 and Tyr50.

It catalyses the reaction a chalcone = a flavanone.. It participates in secondary metabolite biosynthesis; flavonoid biosynthesis. Functionally, chalcone isomerase; part of the gene cluster that mediates the biosynthesis of chlorflavonin, a fungal flavonoid with acetolactate synthase inhibitory activity. Within the pathway, cfoK acts as chalcone isomerase (CHI), the key enzyme responsible for the tricyclic formation of flavanone through Michael-type intramolecular cyclization of chalcone. The hydrogen at C2'-OH is extracted by the imidazole ring of His-33, which induces the oxa-Michael addition to form the intermediate enolate through 6-endo-trig mode cyclization. The enolate can then be stabilized by a hydrogen bond with the Tyr-50 residue. Following enol tautomerization, the C ring, a gamma-pyranone ring, is formed. The pathway begins with the PKS-NRPS hybrid synthetase cfoA that uses benzoic acid or p-hydroxybenzoic acid as a starter unit with four rounds of chain elongation using malonyl-CoA to form the chalcone skeleton. Then, a new type of chalcone isomerase, cfoK, catalyzes the conversion of the chalcone into a flavanone by a histidine-mediated oxa-Michael addition mechanism. The desaturation of flavanone to flavone is catalyzed by a new type of flavone synthase, the flavin mononucleotide (FMN)-dependent oxidoreductase cfoJ. Monooxygenases cfoF, cfoG, and P450 cfoH are responsible for the hydroxylation of the flavonoid skeleton at sites C3, C8, and C2', respectively. Like cfoF, the dehydratase cfoI plays also a role in the hydroxylation of position C3. Methyltransferases cfoB, cfoC, and cfoD then catalyze the methylation of C7-OH, C8-OH, and C3-OH, respectively. Finally, the monooxygenase cfoE is responsible for the chlorination of flavonoid at position C3'. This chain is Chalcone isomerase cfoK, found in Aspergillus candidus.